Reading from the N-terminus, the 353-residue chain is UPF0324 membrane protein PP_3661 (353 aa).

8 helical membrane-spanning segments follow: residues leucine 20–isoleucine 42, alanine 70–glycine 92, tryptophan 105–methionine 127, alanine 137–leucine 159, serine 166–isoleucine 188, methionine 234–arginine 253, isoleucine 266–proline 288, and alanine 326–valine 348.

The protein belongs to the UPF0324 family.

Its subcellular location is the cell membrane. The chain is UPF0324 membrane protein PP_3661 from Pseudomonas putida (strain ATCC 47054 / DSM 6125 / CFBP 8728 / NCIMB 11950 / KT2440).